The following is a 67-amino-acid chain: Probable Sec-independent protein translocase protein TatE (67 aa).

A helical membrane pass occupies residues 4–21 (ISITKLLVIAALVVLLFG). The disordered stretch occupies residues 44 to 67 (NDDDTGAKTPAASEAPAERLSHKE).

The protein belongs to the TatA/E family. TatE subfamily.

The protein resides in the cell inner membrane. Its function is as follows. Part of the twin-arginine translocation (Tat) system that transports large folded proteins containing a characteristic twin-arginine motif in their signal peptide across membranes. TatE shares overlapping functions with TatA. The polypeptide is Probable Sec-independent protein translocase protein TatE (Cronobacter sakazakii (strain ATCC BAA-894) (Enterobacter sakazakii)).